The primary structure comprises 110 residues: ATP-dependent Clp protease adapter protein ClpS (110 aa).

The span at 1–10 (MSDDRRRGDE) shows a compositional bias: basic and acidic residues. The interval 1-27 (MSDDRRRGDEDGGAGTGVITKTKPKTK) is disordered.

This sequence belongs to the ClpS family. As to quaternary structure, binds to the N-terminal domain of the chaperone ClpA.

In terms of biological role, involved in the modulation of the specificity of the ClpAP-mediated ATP-dependent protein degradation. In Parvibaculum lavamentivorans (strain DS-1 / DSM 13023 / NCIMB 13966), this protein is ATP-dependent Clp protease adapter protein ClpS.